The sequence spans 54 residues: Metallothionein-2 (54 aa).

This sequence belongs to the metallothionein superfamily. Type 11 family.

This Yarrowia lipolytica (strain CLIB 122 / E 150) (Yeast) protein is Metallothionein-2 (MTP2).